The chain runs to 178 residues: Negative modulator of initiation of replication (178 aa).

Residues 113–117 form an interaction with DNA region; the sequence is RTRVY.

This sequence belongs to the SeqA family. In terms of assembly, homodimer. Polymerizes to form helical filaments.

It is found in the cytoplasm. In terms of biological role, negative regulator of replication initiation, which contributes to regulation of DNA replication and ensures that replication initiation occurs exactly once per chromosome per cell cycle. Binds to pairs of hemimethylated GATC sequences in the oriC region, thus preventing assembly of replication proteins and re-initiation at newly replicated origins. Repression is relieved when the region becomes fully methylated. This chain is Negative modulator of initiation of replication, found in Photobacterium profundum (strain SS9).